Reading from the N-terminus, the 67-residue chain is Large ribosomal subunit protein uL29 (67 aa).

The protein belongs to the universal ribosomal protein uL29 family.

The sequence is that of Large ribosomal subunit protein uL29 from Clostridioides difficile (strain 630) (Peptoclostridium difficile).